A 110-amino-acid chain; its full sequence is MRRRENMDVNKAIRTAVDTGKVILGSKRTIKFVKHGEGKLVVLAGNIPKDLEEDVKYYAKLSNIPVYQHKITSLELGAVCGKPFPVAALLVLDEGLSNIMELVEKKEGGE.

The protein belongs to the eukaryotic ribosomal protein eL30 family.

The protein is Large ribosomal subunit protein eL30 (rpl30e) of Methanocaldococcus jannaschii (strain ATCC 43067 / DSM 2661 / JAL-1 / JCM 10045 / NBRC 100440) (Methanococcus jannaschii).